Reading from the N-terminus, the 223-residue chain is Deoxyribose-phosphate aldolase (223 aa).

Residue D91 is the Proton donor/acceptor of the active site. Residue K153 is the Schiff-base intermediate with acetaldehyde of the active site. K182 serves as the catalytic Proton donor/acceptor.

The protein belongs to the DeoC/FbaB aldolase family. DeoC type 1 subfamily.

The protein localises to the cytoplasm. It carries out the reaction 2-deoxy-D-ribose 5-phosphate = D-glyceraldehyde 3-phosphate + acetaldehyde. The protein operates within carbohydrate degradation; 2-deoxy-D-ribose 1-phosphate degradation; D-glyceraldehyde 3-phosphate and acetaldehyde from 2-deoxy-alpha-D-ribose 1-phosphate: step 2/2. Its function is as follows. Catalyzes a reversible aldol reaction between acetaldehyde and D-glyceraldehyde 3-phosphate to generate 2-deoxy-D-ribose 5-phosphate. This Yersinia enterocolitica serotype O:8 / biotype 1B (strain NCTC 13174 / 8081) protein is Deoxyribose-phosphate aldolase.